The sequence spans 328 residues: Phenylalanine--tRNA ligase alpha subunit (328 aa).

Glu-253 is a Mg(2+) binding site.

It belongs to the class-II aminoacyl-tRNA synthetase family. Phe-tRNA synthetase alpha subunit type 1 subfamily. As to quaternary structure, tetramer of two alpha and two beta subunits. The cofactor is Mg(2+).

It is found in the cytoplasm. The enzyme catalyses tRNA(Phe) + L-phenylalanine + ATP = L-phenylalanyl-tRNA(Phe) + AMP + diphosphate + H(+). This is Phenylalanine--tRNA ligase alpha subunit from Coxiella burnetii (strain Dugway 5J108-111).